Reading from the N-terminus, the 266-residue chain is Ribosomal RNA small subunit methyltransferase A (266 aa).

Asn12, Leu14, Gly39, Glu61, Asp87, and Asn107 together coordinate S-adenosyl-L-methionine.

It belongs to the class I-like SAM-binding methyltransferase superfamily. rRNA adenine N(6)-methyltransferase family. RsmA subfamily.

Its subcellular location is the cytoplasm. It catalyses the reaction adenosine(1518)/adenosine(1519) in 16S rRNA + 4 S-adenosyl-L-methionine = N(6)-dimethyladenosine(1518)/N(6)-dimethyladenosine(1519) in 16S rRNA + 4 S-adenosyl-L-homocysteine + 4 H(+). Specifically dimethylates two adjacent adenosines (A1518 and A1519) in the loop of a conserved hairpin near the 3'-end of 16S rRNA in the 30S particle. May play a critical role in biogenesis of 30S subunits. The protein is Ribosomal RNA small subunit methyltransferase A of Nitratidesulfovibrio vulgaris (strain ATCC 29579 / DSM 644 / CCUG 34227 / NCIMB 8303 / VKM B-1760 / Hildenborough) (Desulfovibrio vulgaris).